Reading from the N-terminus, the 311-residue chain is 4-hydroxy-tetrahydrodipicolinate synthase (311 aa).

A pyruvate-binding site is contributed by threonine 51. Catalysis depends on tyrosine 140, which acts as the Proton donor/acceptor. The active-site Schiff-base intermediate with substrate is the lysine 168. Isoleucine 209 contributes to the pyruvate binding site.

The protein belongs to the DapA family. In terms of assembly, homotetramer; dimer of dimers.

The protein localises to the cytoplasm. It catalyses the reaction L-aspartate 4-semialdehyde + pyruvate = (2S,4S)-4-hydroxy-2,3,4,5-tetrahydrodipicolinate + H2O + H(+). Its pathway is amino-acid biosynthesis; L-lysine biosynthesis via DAP pathway; (S)-tetrahydrodipicolinate from L-aspartate: step 3/4. Catalyzes the condensation of (S)-aspartate-beta-semialdehyde [(S)-ASA] and pyruvate to 4-hydroxy-tetrahydrodipicolinate (HTPA). This chain is 4-hydroxy-tetrahydrodipicolinate synthase, found in Streptococcus suis (strain 98HAH33).